We begin with the raw amino-acid sequence, 295 residues long: Hepatic leukemia factor (295 aa).

A compositionally biased stretch (basic and acidic residues) spans 37–52 (EDAFSKDKDKEKKLDD). Disordered regions lie at residues 37 to 70 (EDAF…PTLW) and 93 to 167 (SENG…IDPD). Residues 225 to 288 (DDKYWARRRK…GKCKNILAKY (64 aa)) form the bZIP domain. A basic motif region spans residues 227-247 (KYWARRRKNNMAAKRSRDARR). A leucine-zipper region spans residues 248–255 (LKENQIAI).

The protein belongs to the bZIP family. PAR subfamily. In terms of assembly, binds DNA specifically as homodimer or heterodimer with other PAR factors. In terms of tissue distribution, highly expressed in liver; lower levels in lung and kidney.

It localises to the nucleus. In Homo sapiens (Human), this protein is Hepatic leukemia factor (HLF).